We begin with the raw amino-acid sequence, 330 residues long: MSEGLFFIIETFIKAVVILAVIACLAGLATYAERKVLAYMQRRIGPDMVGPVGVLQIVADMIKLFTKEDIVPANANRFIFLIAPLISAIAAFAALAPIPFLPEFELFGHTIRPILADINVGVLYVMGVASVCVFSPLMAGLASYNKFALIAAARAVMGLISFEVVSGLALLSVIMITGSLSLIDINNYQKGIFGWFVFKQPLAFVLFLMASFVECNRTPFCLTENETEIVAGYGTEYSGMRWAMFFIGEYANMIASSIVITLIFLGGFNSFWFVPGGLMMIFKASCVFFFFLWTRAAWPHLRPDQLMALCWKILLPLALVNVLITGIALI.

9 consecutive transmembrane segments (helical) span residues 5–25 (LFFI…IACL), 44–64 (IGPD…MIKL), 78–98 (FIFL…LAPI), 122–142 (VLYV…AGLA), 156–176 (VMGL…VIMI), 192–212 (IFGW…MASF), 240–260 (MRWA…SIVI), 271–293 (FWFV…FFLW), and 310–330 (CWKI…IALI).

The protein belongs to the complex I subunit 1 family. As to quaternary structure, NDH-1 is composed of 14 different subunits. Subunits NuoA, H, J, K, L, M, N constitute the membrane sector of the complex.

The protein resides in the cell inner membrane. The enzyme catalyses a quinone + NADH + 5 H(+)(in) = a quinol + NAD(+) + 4 H(+)(out). In terms of biological role, NDH-1 shuttles electrons from NADH, via FMN and iron-sulfur (Fe-S) centers, to quinones in the respiratory chain. The immediate electron acceptor for the enzyme in this species is believed to be ubiquinone. Couples the redox reaction to proton translocation (for every two electrons transferred, four hydrogen ions are translocated across the cytoplasmic membrane), and thus conserves the redox energy in a proton gradient. This subunit may bind ubiquinone. In Campylobacter curvus (strain 525.92), this protein is NADH-quinone oxidoreductase subunit H.